Reading from the N-terminus, the 114-residue chain is Dolichyl-diphosphooligosaccharide--protein glycosyltransferase subunit DAD2 (114 aa).

Over 1–30 the chain is Cytoplasmic; the sequence is MPKAAGDAKLLIQSLNKAYAATPTNLKIID. The helical transmembrane segment at 31-51 threads the bilayer; it reads LYVVFAVATALVQVVYMGIVG. At 52–54 the chain is on the lumenal side; the sequence is SFP. Residues 55 to 75 traverse the membrane as a helical segment; sequence FNSFLSGVLSSIGTAVLGVCL. Residues 76–93 lie on the Cytoplasmic side of the membrane; that stretch reads RIQVNKDNKEFKDLPPER. The helical transmembrane segment at 94–114 threads the bilayer; the sequence is AFADFVLCNLVLHLVIMNFLG.

This sequence belongs to the DAD/OST2 family. As to quaternary structure, component of the oligosaccharyltransferase (OST) complex.

It localises to the endoplasmic reticulum membrane. It participates in protein modification; protein glycosylation. Its function is as follows. Subunit of the oligosaccharyl transferase (OST) complex that catalyzes the initial transfer of a defined glycan (Glc(3)Man(9)GlcNAc(2) in eukaryotes) from the lipid carrier dolichol-pyrophosphate to an asparagine residue within an Asn-X-Ser/Thr consensus motif in nascent polypeptide chains, the first step in protein N-glycosylation. N-glycosylation occurs cotranslationally and the complex associates with the Sec61 complex at the channel-forming translocon complex that mediates protein translocation across the endoplasmic reticulum (ER). All subunits are required for a maximal enzyme activity. In Hordeum vulgare (Barley), this protein is Dolichyl-diphosphooligosaccharide--protein glycosyltransferase subunit DAD2 (DAD2).